The chain runs to 121 residues: UPF0738 protein BPUM_1088 (121 aa).

The protein belongs to the UPF0738 family.

This is UPF0738 protein BPUM_1088 from Bacillus pumilus (strain SAFR-032).